The following is a 345-amino-acid chain: MTDKTSLSYKDAGVDIDAGNALVERIKGVAKRTRRPEVMGGLGGFGALCRIPAGYREPILVSGTDGVGTKLRLAIDLKKHDTVGIDLVAMCVNDLIVQGAEPLFFLDYYATGKLDVDTAAAVVTGIGAGCEQSNCALVGGETAEMPGMYEGEDYDMAGFCVGVVEASEIIDGSKVAAGDALIALASSGPHSNGFSLIRKILEVSKADVQQPLGDSTLANALLAPTRIYVKPVLKLLKNCEVHALSHITGGGFWENIPRVLPENTKAVIDGSSWQWPEVFNWLQKSGNVETYEMYRTFNCGVGMIIALPQAQVDAALALLKAEGENAWLIGQIEQAAAGEKQVEIN.

The protein belongs to the AIR synthase family.

Its subcellular location is the cytoplasm. It carries out the reaction 2-formamido-N(1)-(5-O-phospho-beta-D-ribosyl)acetamidine + ATP = 5-amino-1-(5-phospho-beta-D-ribosyl)imidazole + ADP + phosphate + H(+). It participates in purine metabolism; IMP biosynthesis via de novo pathway; 5-amino-1-(5-phospho-D-ribosyl)imidazole from N(2)-formyl-N(1)-(5-phospho-D-ribosyl)glycinamide: step 2/2. In Tolumonas auensis (strain DSM 9187 / NBRC 110442 / TA 4), this protein is Phosphoribosylformylglycinamidine cyclo-ligase.